The following is a 309-amino-acid chain: 11-beta-hydroxysteroid dehydrogenase-like 3 (309 aa).

A helical; Signal-anchor for type II membrane protein transmembrane segment spans residues 10 to 30; sequence LLLPPLTIIFLFLFYPFYLLI. NADP(+) contacts are provided by residues 54–80 and aspartate 105; that span reads GASS…VARR. Serine 184 is a binding site for substrate. Tyrosine 197 serves as the catalytic Proton acceptor. NADP(+) contacts are provided by residues 197-201 and lysine 201; that span reads YAASK.

Belongs to the short-chain dehydrogenases/reductases (SDR) family.

The protein resides in the membrane. This chain is 11-beta-hydroxysteroid dehydrogenase-like 3 (HSD3), found in Arabidopsis thaliana (Mouse-ear cress).